The primary structure comprises 428 residues: Glutamate-1-semialdehyde 2,1-aminomutase 1 (428 aa).

Position 268 is an N6-(pyridoxal phosphate)lysine (Lys-268).

It belongs to the class-III pyridoxal-phosphate-dependent aminotransferase family. HemL subfamily. Homodimer. Pyridoxal 5'-phosphate serves as cofactor.

It localises to the cytoplasm. The enzyme catalyses (S)-4-amino-5-oxopentanoate = 5-aminolevulinate. It functions in the pathway porphyrin-containing compound metabolism; protoporphyrin-IX biosynthesis; 5-aminolevulinate from L-glutamyl-tRNA(Glu): step 2/2. The polypeptide is Glutamate-1-semialdehyde 2,1-aminomutase 1 (Geobacillus thermodenitrificans (strain NG80-2)).